A 457-amino-acid chain; its full sequence is Bifunctional protein GlmU (457 aa).

Positions 1–230 (MSKRYAVVLA…FEESLGVNDR (230 aa)) are pyrophosphorylase. UDP-N-acetyl-alpha-D-glucosamine contacts are provided by residues 9–12 (LAAG), K23, Q73, and 78–79 (GT). Residue D103 participates in Mg(2+) binding. Positions 140, 155, 170, and 228 each coordinate UDP-N-acetyl-alpha-D-glucosamine. N228 serves as a coordination point for Mg(2+). The tract at residues 231–251 (IALAEASKLMQRRINENHMRN) is linker. The segment at 252–457 (GVTLVNPEST…GYAKHLNHGK (206 aa)) is N-acetyltransferase. The UDP-N-acetyl-alpha-D-glucosamine site is built by R333 and K351. The Proton acceptor role is filled by H363. Residues Y366 and N377 each coordinate UDP-N-acetyl-alpha-D-glucosamine. Residues 386-387 (NY), A423, and R440 contribute to the acetyl-CoA site.

In the N-terminal section; belongs to the N-acetylglucosamine-1-phosphate uridyltransferase family. It in the C-terminal section; belongs to the transferase hexapeptide repeat family. In terms of assembly, homotrimer. Mg(2+) serves as cofactor.

It is found in the cytoplasm. It carries out the reaction alpha-D-glucosamine 1-phosphate + acetyl-CoA = N-acetyl-alpha-D-glucosamine 1-phosphate + CoA + H(+). The enzyme catalyses N-acetyl-alpha-D-glucosamine 1-phosphate + UTP + H(+) = UDP-N-acetyl-alpha-D-glucosamine + diphosphate. Its pathway is nucleotide-sugar biosynthesis; UDP-N-acetyl-alpha-D-glucosamine biosynthesis; N-acetyl-alpha-D-glucosamine 1-phosphate from alpha-D-glucosamine 6-phosphate (route II): step 2/2. It participates in nucleotide-sugar biosynthesis; UDP-N-acetyl-alpha-D-glucosamine biosynthesis; UDP-N-acetyl-alpha-D-glucosamine from N-acetyl-alpha-D-glucosamine 1-phosphate: step 1/1. It functions in the pathway bacterial outer membrane biogenesis; LPS lipid A biosynthesis. Functionally, catalyzes the last two sequential reactions in the de novo biosynthetic pathway for UDP-N-acetylglucosamine (UDP-GlcNAc). The C-terminal domain catalyzes the transfer of acetyl group from acetyl coenzyme A to glucosamine-1-phosphate (GlcN-1-P) to produce N-acetylglucosamine-1-phosphate (GlcNAc-1-P), which is converted into UDP-GlcNAc by the transfer of uridine 5-monophosphate (from uridine 5-triphosphate), a reaction catalyzed by the N-terminal domain. This Listeria monocytogenes serotype 4a (strain HCC23) protein is Bifunctional protein GlmU.